Here is a 258-residue protein sequence, read N- to C-terminus: Probable enoyl-CoA hydratase (258 aa).

This sequence belongs to the enoyl-CoA hydratase/isomerase family.

The catalysed reaction is a (3S)-3-hydroxyacyl-CoA = a (2E)-enoyl-CoA + H2O. The enzyme catalyses a 4-saturated-(3S)-3-hydroxyacyl-CoA = a (3E)-enoyl-CoA + H2O. It participates in lipid metabolism; fatty acid beta-oxidation. Functionally, involved in the degradation of long-chain fatty acids. In Bacillus subtilis (strain 168), this protein is Probable enoyl-CoA hydratase (fadB).